The following is a 537-amino-acid chain: CTP synthase (537 aa).

The segment at 1-268 (MPFKCIFLTG…STFITEKLGL (268 aa)) is amidoligase domain. Ser-14 provides a ligand contact to CTP. Position 14 (Ser-14) interacts with UTP. Residue 15-20 (SLGKGL) coordinates ATP. Tyr-55 contributes to the L-glutamine binding site. Position 72 (Asp-72) interacts with ATP. Residues Asp-72 and Glu-142 each contribute to the Mg(2+) site. CTP contacts are provided by residues 149–151 (DIE), 188–193 (KTKPTQ), and Lys-224. UTP contacts are provided by residues 188-193 (KTKPTQ) and Lys-224. The Glutamine amidotransferase type-1 domain occupies 294-533 (RIGLVGKYVQ…IQAALLYSKN (240 aa)). Residue Gly-353 coordinates L-glutamine. The active-site Nucleophile; for glutamine hydrolysis is Cys-380. Residues 381 to 384 (LGMQ), Glu-404, and Arg-461 contribute to the L-glutamine site. Active-site residues include His-506 and Glu-508.

This sequence belongs to the CTP synthase family. In terms of assembly, homotetramer.

It carries out the reaction UTP + L-glutamine + ATP + H2O = CTP + L-glutamate + ADP + phosphate + 2 H(+). It catalyses the reaction L-glutamine + H2O = L-glutamate + NH4(+). The enzyme catalyses UTP + NH4(+) + ATP = CTP + ADP + phosphate + 2 H(+). It participates in pyrimidine metabolism; CTP biosynthesis via de novo pathway; CTP from UDP: step 2/2. With respect to regulation, allosterically activated by GTP, when glutamine is the substrate; GTP has no effect on the reaction when ammonia is the substrate. The allosteric effector GTP functions by stabilizing the protein conformation that binds the tetrahedral intermediate(s) formed during glutamine hydrolysis. Inhibited by the product CTP, via allosteric rather than competitive inhibition. In terms of biological role, catalyzes the ATP-dependent amination of UTP to CTP with either L-glutamine or ammonia as the source of nitrogen. Regulates intracellular CTP levels through interactions with the four ribonucleotide triphosphates. The sequence is that of CTP synthase from Chlamydia caviae (strain ATCC VR-813 / DSM 19441 / 03DC25 / GPIC) (Chlamydophila caviae).